Reading from the N-terminus, the 145-residue chain is Transcriptional anti-antiactivator ExsC (145 aa).

In terms of assembly, homodimer. Interacts with ExsE. Interacts directly with ExsD to form a heterotetrameric complex.

It localises to the cytoplasm. In the absence of inducing signals, ExsE interacts with and inhibits ExsC activity. Part of the regulatory cascade that plays a role in the transcriptional regulation of the type III secretion system (T3SS). Interacts with antiactivator ExsD to inhibit its activity leading to ExsA-mediated transcription. The chain is Transcriptional anti-antiactivator ExsC (exsC) from Pseudomonas aeruginosa (strain ATCC 15692 / DSM 22644 / CIP 104116 / JCM 14847 / LMG 12228 / 1C / PRS 101 / PAO1).